Consider the following 215-residue polypeptide: uncharacterized protein (215 aa).

A disordered region spans residues 25–48 (LKSASPGPAPASQQASSFGSAPAQ). Over residues 27 to 47 (SASPGPAPASQQASSFGSAPA) the composition is skewed to low complexity.

This is an uncharacterized protein from Homo sapiens (Human).